Consider the following 744-residue polypeptide: Biotin sulfoxide reductase (744 aa).

Residue Ser-121 coordinates Mo-bis(molybdopterin guanine dinucleotide).

Belongs to the prokaryotic molybdopterin-containing oxidoreductase family. Mo-bis(molybdopterin guanine dinucleotide) serves as cofactor.

Its function is as follows. This enzyme may serve as a scavenger, allowing the cell to utilize biotin sulfoxide as a biotin source. It reduces a spontaneous oxidation product of biotin, D-biotin D-sulfoxide (BSO or BDS), back to biotin. In Cereibacter sphaeroides (Rhodobacter sphaeroides), this protein is Biotin sulfoxide reductase.